A 65-amino-acid chain; its full sequence is Large ribosomal subunit protein bL35 (65 aa).

A disordered region spans residues 1 to 26 (MPKMKTNKSAQKRFKKTGSGRFKCKQ). The span at 10–26 (AQKRFKKTGSGRFKCKQ) shows a compositional bias: basic residues.

It belongs to the bacterial ribosomal protein bL35 family.

This is Large ribosomal subunit protein bL35 from Hydrogenovibrio crunogenus (strain DSM 25203 / XCL-2) (Thiomicrospira crunogena).